We begin with the raw amino-acid sequence, 364 residues long: Heat-inducible transcription repressor HrcA (364 aa).

Belongs to the HrcA family.

Functionally, negative regulator of class I heat shock genes (grpE-dnaK-dnaJ and groELS operons). Prevents heat-shock induction of these operons. In Cyanothece sp. (strain PCC 7425 / ATCC 29141), this protein is Heat-inducible transcription repressor HrcA.